A 107-amino-acid chain; its full sequence is MDLNNRLTEDETLEQAYDIFLELAGDNLDPADILLFNLQFEERGGAELFDPAEDWQEHVDFDINPDFFAEVVIGLADSDGEEINDIFARVLLCREKDHKLCHILWKE.

It belongs to the putative dsDNA mimic protein family.

In terms of biological role, may act as a double-stranded DNA (dsDNA) mimic. Probably regulates the activity of a dsDNA-binding protein. This is Putative double-stranded DNA mimic protein YpsIP31758_1954 from Yersinia pseudotuberculosis serotype O:1b (strain IP 31758).